Here is a 366-residue protein sequence, read N- to C-terminus: MTPEHLPTEQYEAQLAEKVARLQSMMAPFSGLVPEVFRSPVSHYRMRAEFRLWHDGDNLYHIMFDQQTKSRIRVDTFPAASQLINTLMKAMIAGVRDNHALRHKLFQIDYLTTLSNQAVVSLLYHKKLDEEWREAATALRDALRAQGLNVHLIGRATKTKIELDQDYIDERLPVAGKEIIYRQVENSFTQPNAAMNIQMLEWALEVTKDSKGDLLELYCGNGNFSLALARNFNRVLATEIAKPSVAAAQYNIAANHIDNVQIIRMAAEEFTQAMNGVREFNRLQGIDLKRYQCETIFVDPPRSGLDSETEKMVQAYPRILYISCNPETLCKNLETLSQTHTVSRLALFDQFPYTHHMECGVLLTAR.

Residues Gln190, Tyr218, Asn223, Glu239, and Asp299 each coordinate S-adenosyl-L-methionine. Catalysis depends on Cys324, which acts as the Nucleophile. The active-site Proton acceptor is Glu358.

Belongs to the class I-like SAM-binding methyltransferase superfamily. RNA M5U methyltransferase family. TrmA subfamily.

It catalyses the reaction uridine(54) in tRNA + S-adenosyl-L-methionine = 5-methyluridine(54) in tRNA + S-adenosyl-L-homocysteine + H(+). It carries out the reaction uridine(341) in tmRNA + S-adenosyl-L-methionine = 5-methyluridine(341) in tmRNA + S-adenosyl-L-homocysteine + H(+). Dual-specificity methyltransferase that catalyzes the formation of 5-methyluridine at position 54 (m5U54) in all tRNAs, and that of position 341 (m5U341) in tmRNA (transfer-mRNA). This chain is tRNA/tmRNA (uracil-C(5))-methyltransferase, found in Salmonella typhi.